The sequence spans 201 residues: Recombination protein RecR (201 aa).

The C4-type zinc finger occupies 57-72 (CADCRTFTEQEVCNIC). The 96-residue stretch at 81–176 (GQICVVESPA…EASRIAHGVP (96 aa)) folds into the Toprim domain.

This sequence belongs to the RecR family.

May play a role in DNA repair. It seems to be involved in an RecBC-independent recombinational process of DNA repair. It may act with RecF and RecO. This chain is Recombination protein RecR, found in Escherichia coli O6:K15:H31 (strain 536 / UPEC).